Consider the following 652-residue polypeptide: uncharacterized protein (652 aa).

2 stretches are compositionally biased toward basic and acidic residues: residues 1–13 (MSVT…TERK) and 641–652 (ATERTDNLADAA). 2 disordered regions span residues 1–21 (MSVT…PAKT) and 628–652 (VPGW…ADAA).

It belongs to the ParB family.

This is an uncharacterized protein from Escherichia coli O157:H7.